The following is a 551-amino-acid chain: MLKRIKIVTSLLLVLAVFGLLQLTSGGLFFNALKNDKENFTVLQTIRQQQSTLNGSWVALLQTRNTLNRAGIRYMMDQNNIGSGSTVAELMESASISLKQAEKNWADYEALPRDPRQSTAAAAEIKRNYDIYHNALAELIQLLGAGKINEFFDQPTQGYQDGFEKQYVAYMEQNDRLHDIAVSDNNASYSQAMWILVGVMIVVLAVIFAVWFGIKASLVAPMNRLIDSIRHIAGGDLVKPIEVDGSNEMGQLAESLRHMQGELMRTVGDVRNGANAIYSGASEIATGNNDLSSRTEQQAASLEETAASMEQLTATVKQNAENARQASHLALSASETAQRGGKVVDNVVQTMRDISTSSQKIADIISVIDGIAFQTNILALNAAVEAARAGEQGRGFAVVAGEVRNLAQRSAQAAREIKSLIEDSVGKVDVGSTLVESAGETMAEIVSAVTRVTDIMGEIASASDEQSRGIDQVGLAVAEMDRVTQQNAALVEESAAAAAALEEQASRLTEAVAVFRIQQQQRETSAVVKTVTPAAPRKMAVADSEENWETF.

Over 1 to 6 (MLKRIK) the chain is Cytoplasmic. The chain crosses the membrane as a helical span at residues 7–30 (IVTSLLLVLAVFGLLQLTSGGLFF). The Periplasmic portion of the chain corresponds to 31-190 (NALKNDKENF…AVSDNNASYS (160 aa)). Positions 64-73 (RNTLNRAGIR) are the 3 Arg may form a positively charged pocket, which binds the alpha-carboxyl group of the attractant AA. A helical membrane pass occupies residues 191 to 210 (QAMWILVGVMIVVLAVIFAV). Topologically, residues 211–551 (WFGIKASLVA…ADSEENWETF (341 aa)) are cytoplasmic. Residues 216–268 (ASLVAPMNRLIDSIRHIAGGDLVKPIEVDGSNEMGQLAESLRHMQGELMRTVG) form the HAMP domain. The 230-residue stretch at 273–502 (GANAIYSGAS…ESAAAAAALE (230 aa)) folds into the Methyl-accepting transducer domain. Glutamine 297 carries the glutamate methyl ester (Gln) modification. Glutamate 304 carries the glutamate methyl ester (Glu) modification. Residue glutamine 311 is modified to Glutamate methyl ester (Gln). Glutamate methyl ester (Glu) occurs at positions 493 and 502.

It belongs to the methyl-accepting chemotaxis (MCP) protein family.

The protein resides in the cell inner membrane. Receptor for the attractant L-serine and related amino acids. Is also responsible for chemotaxis away from a wide range of repellents, including leucine, indole, and weak acids. Its function is as follows. Chemotactic-signal transducers respond to changes in the concentration of attractants and repellents in the environment, transduce a signal from the outside to the inside of the cell, and facilitate sensory adaptation through the variation of the level of methylation. Attractants increase the level of methylation while repellents decrease the level of methylation, the methyl groups are added by the methyltransferase CheR and removed by the methylesterase CheB. In Escherichia coli (strain K12), this protein is Methyl-accepting chemotaxis protein I (tsr).